Reading from the N-terminus, the 289-residue chain is MEEGGRSPREEAAEPQESGGDAEPGGGRRALLLPPGDPPHPHPHPHRITNFFIDNILRPEFGRRKEAGGTAGEPRRPGAESRRSPAAAAPAPGAPVPGGGGGGGGGSPGRGEGGPAALALHGAAKKGGDPAALEAALKARGLSGAELSVSSDSDSSQAGSNAGNQPMLWPAWVYCTRYSDRPSSGPRSRKPKKKNPNKEDKRPRTAFTAEQLQRLKAEFQTNRYLTEQRRQSLAQELGLNESQIKIWFQNKRAKIKKATGSKNSLAVHLMAQGLYNHSTTAKDGKSDSE.

Basic and acidic residues-rich tracts occupy residues 1-12 (MEEGGRSPREEA) and 60-83 (EFGR…ESRR). 2 disordered regions span residues 1 to 166 (MEEG…GNQP) and 179 to 206 (SDRP…PRTA). Residues 96 to 114 (VPGGGGGGGGGSPGRGEGG) show a composition bias toward gly residues. Positions 142 to 160 (LSGAELSVSSDSDSSQAGS) are enriched in low complexity. The homeobox DNA-binding region spans 200-259 (DKRPRTAFTAEQLQRLKAEFQTNRYLTEQRRQSLAQELGLNESQIKIWFQNKRAKIKKAT).

This sequence belongs to the engrailed homeobox family.

Its subcellular location is the nucleus. The sequence is that of Homeobox protein engrailed-2 (EN2) from Gallus gallus (Chicken).